Reading from the N-terminus, the 363-residue chain is Inactive CLIP domain-containing serine protease A8 (363 aa).

The first 25 residues, 1–25 (MPSWWCCCCLVVLLYAQRMIVPSSA), serve as a signal peptide directing secretion. Residues 33–82 (LQECPGGFCSPKYLCPNGTYNEANAQNQEIIMLRFGEEDVCQDYMQVCCS) enclose the Clip domain. Intrachain disulfides connect C36–C80, C41–C73, and C47–C81. N-linked (GlcNAc...) asparagine glycans are attached at residues N49, N83, N117, and N166. The Peptidase S1 domain occupies 114–360 (VEGNRTYAQY…FVTWINATIE (247 aa)). Disulfide bonds link C245-C317, C276-C297, and C307-C336. 2 N-linked (GlcNAc...) asparagine glycosylation sites follow: N319 and N356.

This sequence belongs to the peptidase S1 family. CLIP subfamily. As to quaternary structure, heterodimer of a light chain and a heavy chain; disulfide-linked. In terms of processing, secreted as a full-length protein. Proteolytically cleaved into two chains which remain covalently linked. Cleavage is induced by Gram-positive or Gram-negative bacteria infection.

It localises to the secreted. Functionally, inactive serine protease which plays an essential role in the innate immune response against bacteria, fungi and protozoa infection by activating the melanization cascade. In the melanization cascade, acts downstream of TEP1 and SPCLIP1 to promote CLIPA28 and CLIPC9 proteolytic cleavage and CLIPC9 recruitment to microbial surfaces. In the resistant strain L3-5, required for the melanization of killed parasite P.berghei ookinetes which results in their clearance. In the susceptible strain G3, appears to be dispensable for ookinete elimination which occurs by lysis. Required for the melanization of Gram-positive and Gram-negative bacteria. During the late stage of fungus B.bassiana-mediated infection, required for the initiation of hyphae melanization by promoting prophenoloxidase PPO activation. This is Inactive CLIP domain-containing serine protease A8 from Anopheles gambiae (African malaria mosquito).